Here is a 272-residue protein sequence, read N- to C-terminus: Tryptophan synthase alpha chain (272 aa).

Catalysis depends on proton acceptor residues Glu-49 and Asp-60.

Belongs to the TrpA family. As to quaternary structure, tetramer of two alpha and two beta chains.

The enzyme catalyses (1S,2R)-1-C-(indol-3-yl)glycerol 3-phosphate + L-serine = D-glyceraldehyde 3-phosphate + L-tryptophan + H2O. Its pathway is amino-acid biosynthesis; L-tryptophan biosynthesis; L-tryptophan from chorismate: step 5/5. Its function is as follows. The alpha subunit is responsible for the aldol cleavage of indoleglycerol phosphate to indole and glyceraldehyde 3-phosphate. The polypeptide is Tryptophan synthase alpha chain (Polaromonas naphthalenivorans (strain CJ2)).